We begin with the raw amino-acid sequence, 720 residues long: DNA replication licensing factor mcm7 (720 aa).

Residues 183-210 (CDQCGAETYQPIQSPTFMPLIMCPSREC) form a C4-type zinc finger. One can recognise an MCM domain in the interval 331-537 (FYEKLAASIA…NDLRLAQHIT (207 aa)). Residues Y344, G383, A385, K386, S387, N488, R513, and R603 each contribute to the ATP site. An Arginine finger motif is present at residues 512–515 (SRFD).

This sequence belongs to the MCM family. As to quaternary structure, component of the mcm2-7 complex (RLF-M). The complex forms a toroidal hexameric ring with the proposed subunit order mcm2-mcm6-mcm4-mcm7-mcm3-mcm5. The heterodimer of mmcm3/mcm5 interacts with mcm4, mmcm6, mcm7 and weakly with mcm2. The N-terminus is required for interaction with mmcm3, though this interaction may not be direct, and remains in a complex with mmcm3 throughout the cell cycle. Begins to associate with zmcm6 at the neurula stage. Component of the replisome complex. Component of the CMG helicase complex, composed of the mcm2-7 complex, the GINS complex and cdc45. In terms of processing, ubiquitinated by traip when forks converge following formation of DNA interstrand cross-links. Short ubiquitin chains on mcm7 promote recruitment of DNA glycosylase neil3. If the interstrand cross-link cannot be cleaved by neil3, the ubiquitin chains continue to grow on mcm7, promoting the unloading of the CMG helicase complex by the vcp/p97 ATPase.

The protein resides in the nucleus. It is found in the chromosome. It carries out the reaction ATP + H2O = ADP + phosphate + H(+). Functionally, acts as a component of the mcm2-7 complex (mcm complex) which is the putative replicative helicase essential for 'once per cell cycle' DNA replication initiation and elongation in eukaryotic cells. The active ATPase sites in the mcm2-7 ring are formed through the interaction surfaces of two neighboring subunits such that a critical structure of a conserved arginine finger motif is provided in trans relative to the ATP-binding site of the Walker A box of the adjacent subunit. The six ATPase active sites, however, are likely to contribute differentially to the complex helicase activity. The existence of maternal and zygotic forms of mcm3 and mcm6 suggests that specific forms of mcm2-7 complexes may be used during different stages of development. This is DNA replication licensing factor mcm7 from Xenopus tropicalis (Western clawed frog).